Reading from the N-terminus, the 61-residue chain is Small ribosomal subunit protein uS14 (61 aa).

4 residues coordinate Zn(2+): C24, C27, C40, and C43.

Belongs to the universal ribosomal protein uS14 family. Zinc-binding uS14 subfamily. As to quaternary structure, part of the 30S ribosomal subunit. Contacts proteins S3 and S10. It depends on Zn(2+) as a cofactor.

Its function is as follows. Binds 16S rRNA, required for the assembly of 30S particles and may also be responsible for determining the conformation of the 16S rRNA at the A site. The chain is Small ribosomal subunit protein uS14 from Herpetosiphon aurantiacus (strain ATCC 23779 / DSM 785 / 114-95).